The sequence spans 64 residues: MFTLTATRDRDGKNTKVSASHRQILIDHLEAAASRNGLVIDQLGDGGHIYLRGEAVGTWEVSAS.

This Mycobacterium (Mycobacteriophage D29) protein is Gene 84 protein (84).